The primary structure comprises 98 residues: Venom toxin OcyC11 (98 aa).

Positions 1–20 (MKIACTLVLFVMLRCYVNAR) are cleaved as a signal peptide.

Post-translationally, contains 4 disulfide bonds. Expressed by the venom gland.

It localises to the secreted. In Opisthacanthus cayaporum (South American scorpion), this protein is Venom toxin OcyC11.